We begin with the raw amino-acid sequence, 267 residues long: Sorbitol-6-phosphate 2-dehydrogenase (267 aa).

9–38 (DNVIIVTGGASGIGLAIVDELLSQGAHVQM) is a binding site for NAD(+). Ser147 is a binding site for substrate. Tyr160 acts as the Proton acceptor in catalysis.

Belongs to the short-chain dehydrogenases/reductases (SDR) family. Homotetramer.

It catalyses the reaction D-sorbitol 6-phosphate + NAD(+) = beta-D-fructose 6-phosphate + NADH + H(+). Its pathway is carbohydrate metabolism; D-sorbitol degradation; D-fructose 6-phosphate from D-sorbitol 6-phosphate: step 1/1. The chain is Sorbitol-6-phosphate 2-dehydrogenase (sorD) from Klebsiella pneumoniae.